Here is a 312-residue protein sequence, read N- to C-terminus: Malate dehydrogenase (312 aa).

Residues Gly7–Gly13 and Asp34 each bind NAD(+). Positions 81 and 87 each coordinate substrate. NAD(+) is bound by residues Asn94 and Ile117 to Asn119. Residues Asn119 and Arg153 each coordinate substrate. His177 acts as the Proton acceptor in catalysis. Met227 serves as a coordination point for NAD(+).

This sequence belongs to the LDH/MDH superfamily. MDH type 1 family. Homodimer.

The catalysed reaction is (S)-malate + NAD(+) = oxaloacetate + NADH + H(+). Functionally, catalyzes the reversible oxidation of malate to oxaloacetate. The protein is Malate dehydrogenase of Escherichia coli O6:K15:H31 (strain 536 / UPEC).